A 626-amino-acid polypeptide reads, in one-letter code: Chaperone protein HtpG (626 aa).

The tract at residues 1–338 (MTANKNQKKT…SNDLPLNVSR (338 aa)) is a; substrate-binding. Residues 339–553 (EILQDHKLVY…SNEMSTQMAK (215 aa)) are b. The c stretch occupies residues 554–626 (LFSAAGQTVP…ARINDLLINN (73 aa)).

This sequence belongs to the heat shock protein 90 family. As to quaternary structure, homodimer.

It localises to the cytoplasm. Functionally, molecular chaperone. Has ATPase activity. In Buchnera aphidicola subsp. Baizongia pistaciae (strain Bp), this protein is Chaperone protein HtpG.